A 488-amino-acid polypeptide reads, in one-letter code: Cysteine desulfurase, mitochondrial (488 aa).

The interval 25-52 (LPKPLATSSSPATNAPNKTSNPKTGELH) is disordered. Positions 30-47 (ATSSSPATNAPNKTSNPK) are enriched in polar residues. Residues 157 to 158 (AT), Asn237, Gln265, and 285 to 287 (SSH) contribute to the pyridoxal 5'-phosphate site. Residue Lys288 is modified to N6-(pyridoxal phosphate)lysine. Pyridoxal 5'-phosphate is bound at residue Thr325. Cys412 functions as the Cysteine persulfide intermediate in the catalytic mechanism. Cys412 contacts [2Fe-2S] cluster.

Belongs to the class-V pyridoxal-phosphate-dependent aminotransferase family. NifS/IscS subfamily. Pyridoxal 5'-phosphate serves as cofactor.

It is found in the mitochondrion. The enzyme catalyses (sulfur carrier)-H + L-cysteine = (sulfur carrier)-SH + L-alanine. Its function is as follows. Catalyzes the removal of elemental sulfur from cysteine to produce alanine. It supplies the inorganic sulfur for iron-sulfur (Fe-S) clusters. Plays a role in both tRNA-processing and mitochondrial metabolism. Involved in the 2-thio-modification of both 5-carboxymethylaminomethyl-2-thiouridine in mitochondrial tRNAs and 5-methoxycarbonylmethyl-2-thiouridine (mcm5s2U) in cytoplasmic tRNAs. The polypeptide is Cysteine desulfurase, mitochondrial (NFS1) (Candida albicans (strain SC5314 / ATCC MYA-2876) (Yeast)).